Consider the following 247-residue polypeptide: Virulence plasmid protein pGP6-D (247 aa).

It belongs to the UPF0137 (pGP6-D) family.

This is Virulence plasmid protein pGP6-D from Chlamydia trachomatis.